A 255-amino-acid polypeptide reads, in one-letter code: Ribosomal RNA small subunit methyltransferase A (255 aa).

S-adenosyl-L-methionine is bound by residues Asn12, Leu14, Gly39, Glu60, Asp84, and Asn102.

Belongs to the class I-like SAM-binding methyltransferase superfamily. rRNA adenine N(6)-methyltransferase family. RsmA subfamily.

It localises to the cytoplasm. It carries out the reaction adenosine(1518)/adenosine(1519) in 16S rRNA + 4 S-adenosyl-L-methionine = N(6)-dimethyladenosine(1518)/N(6)-dimethyladenosine(1519) in 16S rRNA + 4 S-adenosyl-L-homocysteine + 4 H(+). Functionally, specifically dimethylates two adjacent adenosines (A1518 and A1519) in the loop of a conserved hairpin near the 3'-end of 16S rRNA in the 30S particle. May play a critical role in biogenesis of 30S subunits. This Methylobacillus flagellatus (strain ATCC 51484 / DSM 6875 / VKM B-1610 / KT) protein is Ribosomal RNA small subunit methyltransferase A.